The following is a 144-amino-acid chain: Peptide methionine sulfoxide reductase MsrB (144 aa).

The region spanning 5–128 (KEELRQRIGE…NSAALQFIPV (124 aa)) is the MsrB domain. The Nucleophile role is filled by Cys117.

Belongs to the MsrB Met sulfoxide reductase family.

The catalysed reaction is L-methionyl-[protein] + [thioredoxin]-disulfide + H2O = L-methionyl-(R)-S-oxide-[protein] + [thioredoxin]-dithiol. The polypeptide is Peptide methionine sulfoxide reductase MsrB (Ligilactobacillus salivarius (strain UCC118) (Lactobacillus salivarius)).